Consider the following 77-residue polypeptide: Acyl carrier protein (77 aa).

A Carrier domain is found at S2–A77. At S37 the chain carries O-(pantetheine 4'-phosphoryl)serine.

The protein belongs to the acyl carrier protein (ACP) family. Post-translationally, 4'-phosphopantetheine is transferred from CoA to a specific serine of apo-ACP by AcpS. This modification is essential for activity because fatty acids are bound in thioester linkage to the sulfhydryl of the prosthetic group.

It is found in the cytoplasm. The protein operates within lipid metabolism; fatty acid biosynthesis. In terms of biological role, carrier of the growing fatty acid chain in fatty acid biosynthesis. This is Acyl carrier protein from Cereibacter sphaeroides (strain ATCC 17029 / ATH 2.4.9) (Rhodobacter sphaeroides).